The chain runs to 833 residues: Leucine--tRNA ligase (833 aa).

Residues 41 to 52 (PYPSGAGLHVGH) carry the 'HIGH' region motif. The short motif at 610–614 (KMSKS) is the 'KMSKS' region element. Lys-613 is an ATP binding site.

Belongs to the class-I aminoacyl-tRNA synthetase family.

Its subcellular location is the cytoplasm. The enzyme catalyses tRNA(Leu) + L-leucine + ATP = L-leucyl-tRNA(Leu) + AMP + diphosphate. In Streptococcus equi subsp. zooepidemicus (strain H70), this protein is Leucine--tRNA ligase.